We begin with the raw amino-acid sequence, 176 residues long: MAKHSTREIPAAGPLCTGDTTKASTETSVGATEGPQQKRQRLETLNWEQQQRQYPQTPSTQTTERASQPLDVTRTSDCDTTCPYTVGHPSDPDCAPVVHLKGDPNCLKCFRYRLHKGKRKLYCKTSSTWRWSCESENQAAFVTIWYTSYSQRNEFLSTVKVPPGIQVILGHMSMFV.

Residues 1–70 (MAKHSTREIP…QTTERASQPL (70 aa)) are disordered. Composition is skewed to polar residues over residues 18–37 (GDTT…GPQQ) and 46–66 (NWEQ…TERA).

This sequence belongs to the papillomaviridae E8^E2C protein family.

The protein localises to the host nucleus. In terms of biological role, plays a role in limiting the replication of viral DNA in keratinocytes. Recruits the host NCoR/SMRT complex to viral replication foci to mediate repression of both viral replication and transcription. In Human papillomavirus 28, this protein is Protein E8^E2C.